The sequence spans 397 residues: Mannonate dehydratase (397 aa).

It belongs to the mannonate dehydratase family. Fe(2+) serves as cofactor. Requires Mn(2+) as cofactor.

It catalyses the reaction D-mannonate = 2-dehydro-3-deoxy-D-gluconate + H2O. Its pathway is carbohydrate metabolism; pentose and glucuronate interconversion. Functionally, catalyzes the dehydration of D-mannonate. The chain is Mannonate dehydratase from Yersinia pestis bv. Antiqua (strain Angola).